A 309-amino-acid chain; its full sequence is MKQTRALMEGAILISLFAIITLLVVYVPVIGTILLFALPLPMILYTIRHGLKLGIWMGAVSLPVVFIVGSFNGLIVAFMSACAGIAMGHFFKRKEPGHAIISGALIYMLSIVFYFVISIQFLGINIIDEAMTQYRQSLDIVETVAKQSGNAGQFEKQLKLMEEQLGIVQYLFPTAIVMVGVIFSFLSYLIAKPLLRRFSPDIPNLKPFRELKFPQSVVVLYLIIVMLSFLPLEKGQMLYSIALNGEFILGFLIFIQGLSFIFFYCHKKQYPKAAAVIAVILGFVHPVFMAAIRILGVLDMGFHIRNKVK.

This is an uncharacterized protein from Bacillus subtilis (strain 168).